Here is an 813-residue protein sequence, read N- to C-terminus: Sorting nexin-29 (813 aa).

The 145-residue stretch at 36 to 180 folds into the RUN domain; sequence SDSDSRVTCL…ILFAINIDNK (145 aa). A phosphoserine mark is found at S268, S291, S292, S330, and S344. The interval 269 to 299 is disordered; that stretch reads FDDEEDEQNSGDVFKKTPGAGESSEDNSDRS. Positions 346-357 are enriched in acidic residues; the sequence is DDEDVDENEDDV. Residues 346–378 are disordered; the sequence is DDEDVDENEDDVYGNSSGRKHRGHSESPEKPLE. Phosphoserine occurs at positions 445 and 450. The stretch at 466 to 545 forms a coiled coil; that stretch reads TISELRQATV…VLKVQLKKYV (80 aa). S639 is subject to Phosphoserine. Residue T641 is modified to Phosphothreonine. Phosphoserine is present on residues S642 and S646. The PX domain occupies 656–779; sequence ALINVWIPSV…PFFVDITPPG (124 aa). Positions 778-813 are disordered; sequence PGEPVNSRPKAASRFPKLSRGQPRETRNVEPQSGDL.

The protein belongs to the sorting nexin family.

The protein is Sorting nexin-29 (SNX29) of Homo sapiens (Human).